The chain runs to 443 residues: ATP-dependent protease ATPase subunit HslU (443 aa).

Residues Ile18 and 60-65 (GVGKTE) contribute to the ATP site. The tract at residues 139 to 158 (AKNNWGQNETPAEPSSARQS) is disordered. ATP is bound by residues Asp256, Glu321, and Arg393.

The protein belongs to the ClpX chaperone family. HslU subfamily. A double ring-shaped homohexamer of HslV is capped on each side by a ring-shaped HslU homohexamer. The assembly of the HslU/HslV complex is dependent on binding of ATP.

It localises to the cytoplasm. Its function is as follows. ATPase subunit of a proteasome-like degradation complex; this subunit has chaperone activity. The binding of ATP and its subsequent hydrolysis by HslU are essential for unfolding of protein substrates subsequently hydrolyzed by HslV. HslU recognizes the N-terminal part of its protein substrates and unfolds these before they are guided to HslV for hydrolysis. The sequence is that of ATP-dependent protease ATPase subunit HslU from Erwinia tasmaniensis (strain DSM 17950 / CFBP 7177 / CIP 109463 / NCPPB 4357 / Et1/99).